The primary structure comprises 274 residues: Dermonecrotic toxin SdSicTox-betaIIB1bx (274 aa).

Residue H5 is part of the active site. Mg(2+) contacts are provided by E25 and D27. The active-site Nucleophile is the H41. 2 disulfide bridges follow: C45–C51 and C47–C190. Mg(2+) is bound at residue D85.

This sequence belongs to the arthropod phospholipase D family. Class II subfamily. Mg(2+) is required as a cofactor. In terms of tissue distribution, expressed by the venom gland.

It localises to the secreted. The enzyme catalyses an N-(acyl)-sphingosylphosphocholine = an N-(acyl)-sphingosyl-1,3-cyclic phosphate + choline. It catalyses the reaction an N-(acyl)-sphingosylphosphoethanolamine = an N-(acyl)-sphingosyl-1,3-cyclic phosphate + ethanolamine. The catalysed reaction is a 1-acyl-sn-glycero-3-phosphocholine = a 1-acyl-sn-glycero-2,3-cyclic phosphate + choline. It carries out the reaction a 1-acyl-sn-glycero-3-phosphoethanolamine = a 1-acyl-sn-glycero-2,3-cyclic phosphate + ethanolamine. In terms of biological role, dermonecrotic toxins cleave the phosphodiester linkage between the phosphate and headgroup of certain phospholipids (sphingolipid and lysolipid substrates), forming an alcohol (often choline) and a cyclic phosphate. This toxin acts on sphingomyelin (SM). It may also act on ceramide phosphoethanolamine (CPE), lysophosphatidylcholine (LPC) and lysophosphatidylethanolamine (LPE), but not on lysophosphatidylserine (LPS), and lysophosphatidylglycerol (LPG). It acts by transphosphatidylation, releasing exclusively cyclic phosphate products as second products. Induces dermonecrosis, hemolysis, increased vascular permeability, edema, inflammatory response, and platelet aggregation. The chain is Dermonecrotic toxin SdSicTox-betaIIB1bx from Sicarius cf. damarensis (strain GJB-2008) (Six-eyed sand spider).